An 854-amino-acid polypeptide reads, in one-letter code: Golgin subfamily A member 6-like protein 22 (854 aa).

Disordered regions lie at residues 1–114 (MLMW…HQEA), 320–348 (QEEK…MRRQ), 366–447 (MHEQ…MWRQ), 481–568 (QEEK…MWRQ), 581–681 (RQEE…EQEE), and 714–854 (QEEK…MQEH). Over residues 15 to 35 (LPTHPHLPTHPHLPTHPHLPT) the composition is skewed to basic residues. Residues 45 to 66 (MSKETRQSKLAEAKEQLTDHHP) show a composition bias toward basic and acidic residues. 2 stretches are compositionally biased toward polar residues: residues 67–77 (QTNPSVGTAAS) and 85–97 (NNGT…TSGG). Over residues 100–114 (SPEDEQKASHQHQEA) the composition is skewed to basic and acidic residues. Positions 103–854 (DEQKASHQHQ…RQQEEKMQEH (752 aa)) form a coiled coil.

Belongs to the GOLGA6 family.

This Homo sapiens (Human) protein is Golgin subfamily A member 6-like protein 22.